A 216-amino-acid chain; its full sequence is Probable transaldolase (216 aa).

The active-site Schiff-base intermediate with substrate is K83.

It belongs to the transaldolase family. Type 3B subfamily.

Its subcellular location is the cytoplasm. It catalyses the reaction D-sedoheptulose 7-phosphate + D-glyceraldehyde 3-phosphate = D-erythrose 4-phosphate + beta-D-fructose 6-phosphate. It functions in the pathway carbohydrate degradation; pentose phosphate pathway; D-glyceraldehyde 3-phosphate and beta-D-fructose 6-phosphate from D-ribose 5-phosphate and D-xylulose 5-phosphate (non-oxidative stage): step 2/3. Its function is as follows. Transaldolase is important for the balance of metabolites in the pentose-phosphate pathway. This chain is Probable transaldolase, found in Sphingopyxis alaskensis (strain DSM 13593 / LMG 18877 / RB2256) (Sphingomonas alaskensis).